A 469-amino-acid chain; its full sequence is Adenosylhomocysteinase (469 aa).

Substrate contacts are provided by Thr63, Asp139, and Glu164. Residue 165 to 167 coordinates NAD(+); sequence TTT. Residues Lys194 and Asp198 each coordinate substrate. NAD(+)-binding positions include Asn199, 228-233, Glu251, Asn300, 321-323, and Asn375; these read GYGDVG and IGH.

This sequence belongs to the adenosylhomocysteinase family. It depends on NAD(+) as a cofactor.

It is found in the cytoplasm. It carries out the reaction S-adenosyl-L-homocysteine + H2O = L-homocysteine + adenosine. It participates in amino-acid biosynthesis; L-homocysteine biosynthesis; L-homocysteine from S-adenosyl-L-homocysteine: step 1/1. Functionally, may play a key role in the regulation of the intracellular concentration of adenosylhomocysteine. This chain is Adenosylhomocysteinase, found in Pseudomonas fluorescens (strain Pf0-1).